The primary structure comprises 104 residues: ATP-dependent Clp protease adapter protein ClpS (104 aa).

The protein belongs to the ClpS family. In terms of assembly, binds to the N-terminal domain of the chaperone ClpA.

Functionally, involved in the modulation of the specificity of the ClpAP-mediated ATP-dependent protein degradation. The chain is ATP-dependent Clp protease adapter protein ClpS from Oleidesulfovibrio alaskensis (strain ATCC BAA-1058 / DSM 17464 / G20) (Desulfovibrio alaskensis).